The sequence spans 510 residues: Probable cytosol aminopeptidase (510 aa).

Residues K254 and D259 each coordinate Mn(2+). Residue K266 is part of the active site. Residues D277, D336, and E338 each coordinate Mn(2+). R340 is a catalytic residue. The tract at residues 487 to 510 is disordered; the sequence is AQPVKASPKTRPARKSTPAAKTRA.

The protein belongs to the peptidase M17 family. Mn(2+) is required as a cofactor.

It localises to the cytoplasm. It catalyses the reaction Release of an N-terminal amino acid, Xaa-|-Yaa-, in which Xaa is preferably Leu, but may be other amino acids including Pro although not Arg or Lys, and Yaa may be Pro. Amino acid amides and methyl esters are also readily hydrolyzed, but rates on arylamides are exceedingly low.. The catalysed reaction is Release of an N-terminal amino acid, preferentially leucine, but not glutamic or aspartic acids.. Functionally, presumably involved in the processing and regular turnover of intracellular proteins. Catalyzes the removal of unsubstituted N-terminal amino acids from various peptides. This chain is Probable cytosol aminopeptidase, found in Polaromonas naphthalenivorans (strain CJ2).